We begin with the raw amino-acid sequence, 359 residues long: Membrane-bound lytic murein transglycosylase C (359 aa).

Positions 1–16 are cleaved as a signal peptide; it reads MKKYLALALIAPLLIS. Cysteine 17 carries N-palmitoyl cysteine lipidation. Cysteine 17 carries the S-diacylglycerol cysteine lipid modification.

This sequence belongs to the transglycosylase Slt family.

It localises to the cell outer membrane. It carries out the reaction Exolytic cleavage of the (1-&gt;4)-beta-glycosidic linkage between N-acetylmuramic acid (MurNAc) and N-acetylglucosamine (GlcNAc) residues in peptidoglycan, from either the reducing or the non-reducing ends of the peptidoglycan chains, with concomitant formation of a 1,6-anhydrobond in the MurNAc residue.. Its function is as follows. Murein-degrading enzyme. May play a role in recycling of muropeptides during cell elongation and/or cell division. The chain is Membrane-bound lytic murein transglycosylase C from Shigella flexneri serotype 5b (strain 8401).